We begin with the raw amino-acid sequence, 551 residues long: MAFQDLITQIGCLGRFQILHLIFVLICFILVVPHTVLENFTAAIPSHRCWVPILDNNTMSDNNSRILSQDDLLRISIPMDSNLRPEKCRRYIQPQWDLLHLNGTFSTVTEPDTEPCVDGWVYDQSTFLSTTVTQWDLVCGSQTLNSVAKFIYMTGIFIGHLMGGHLSDKFGRKFIVTCGLLTLAVTETSVAFAPTFLIYCSLRFLTGISSSCIRTNSALLILEWTSPKFQAMVMALIFSAGGIGQVLLGVLAFGIRNWQHLQLAMSVPVFFLLIPTRWLSESARWLIITNKPQEGLKELIKVAHINGIKNSRDVLTLEVVKTTMKDELEAAETKPSPLVLFRTPNLRKRICLLSFVRCVSLISTVGLLINLQYLSNKVFLLQCLYGVVCTPANLLGNFSMNYMGRRTTQIIFMSVMGISILSITFLTQEMQIPRLVLASLGGAISSASLTSTAVLSNELVPTVIRATALGVIGIFGSAGAALSPLLMILMTYSASLPWIIYGVLPILSSLVVLLLPETRNQPLPDSIQDVENKRKSSREVKKDAVAKVTPF.

12 consecutive transmembrane segments (helical) span residues 16–36, 146–166, 174–194, 204–222, 235–255, 260–280, 350–370, 378–398, 410–430, 435–455, 469–489, and 496–516; these read FQIL…PHTV, SVAK…GGHL, FIVT…AFAP, FLTG…LLIL, ALIF…AFGI, HLQL…RWLS, ICLL…LLIN, VFLL…LGNF, IIFM…TQEM, LVLA…TAVL, LGVI…LMIL, and LPWI…LLLP. The segment at 524–551 is disordered; that stretch reads PDSIQDVENKRKSSREVKKDAVAKVTPF. Residues 530–545 are compositionally biased toward basic and acidic residues; it reads VENKRKSSREVKKDAV.

Localized to the kidney. Mainly expressed in the late segments of proximal tubules.

Its subcellular location is the cell membrane. The catalysed reaction is estrone 3-sulfate(out) + glutarate(in) = estrone 3-sulfate(in) + glutarate(out). The enzyme catalyses 17beta-estradiol 17-O-(beta-D-glucuronate)(out) + glutarate(in) = 17beta-estradiol 17-O-(beta-D-glucuronate)(in) + glutarate(out). It catalyses the reaction dehydroepiandrosterone 3-sulfate(out) + glutarate(in) = dehydroepiandrosterone 3-sulfate(in) + glutarate(out). Functionally, renal transmembrane organic anion/dicarboxylate exchanger that participates in the reabsorption of conjugated steroids, as well as bile acids, driven by an outward gradient of dicarboxylates such as glutarate or succinate. Transports estrone 3-sulfate and estradiol-17-glucuronide (17beta-estradiol 17-O-(beta-D-glucuronate)), but not androstanediol glucuronide (5alpha-androstane-3alpha,17beta-diol 3-O-(beta-D-glucuronate)), nor taurocholate. Prefers sulfate conjugates of steroids rather than glucuronide conjugates. The polypeptide is Steroid transmembrane transporter SLC22A24 (Rattus norvegicus (Rat)).